We begin with the raw amino-acid sequence, 426 residues long: Serine--tRNA ligase (426 aa).

Thr227–Glu229 is a binding site for L-serine. Residues Arg258–Glu260 and Val274 contribute to the ATP site. Glu281 is a binding site for L-serine. Glu345–Ser348 contacts ATP. Thr380 serves as a coordination point for L-serine.

Belongs to the class-II aminoacyl-tRNA synthetase family. Type-1 seryl-tRNA synthetase subfamily. Homodimer. The tRNA molecule binds across the dimer.

Its subcellular location is the cytoplasm. The catalysed reaction is tRNA(Ser) + L-serine + ATP = L-seryl-tRNA(Ser) + AMP + diphosphate + H(+). It carries out the reaction tRNA(Sec) + L-serine + ATP = L-seryl-tRNA(Sec) + AMP + diphosphate + H(+). It functions in the pathway aminoacyl-tRNA biosynthesis; selenocysteinyl-tRNA(Sec) biosynthesis; L-seryl-tRNA(Sec) from L-serine and tRNA(Sec): step 1/1. In terms of biological role, catalyzes the attachment of serine to tRNA(Ser). Is also able to aminoacylate tRNA(Sec) with serine, to form the misacylated tRNA L-seryl-tRNA(Sec), which will be further converted into selenocysteinyl-tRNA(Sec). In Clavibacter sepedonicus (Clavibacter michiganensis subsp. sepedonicus), this protein is Serine--tRNA ligase.